We begin with the raw amino-acid sequence, 124 residues long: Acidic phospholipase A2 A (124 aa).

7 cysteine pairs are disulfide-bonded: cysteine 26–cysteine 116, cysteine 28–cysteine 44, cysteine 43–cysteine 95, cysteine 49–cysteine 124, cysteine 50–cysteine 88, cysteine 57–cysteine 81, and cysteine 75–cysteine 86. Ca(2+) contacts are provided by tyrosine 27, glycine 29, and glycine 31. Residue histidine 47 is part of the active site. Position 48 (aspartate 48) interacts with Ca(2+). The active site involves aspartate 89.

Belongs to the phospholipase A2 family. Group II subfamily. D49 sub-subfamily. Requires Ca(2+) as cofactor. In terms of tissue distribution, expressed by the venom gland.

The protein resides in the secreted. It catalyses the reaction a 1,2-diacyl-sn-glycero-3-phosphocholine + H2O = a 1-acyl-sn-glycero-3-phosphocholine + a fatty acid + H(+). In terms of biological role, PLA2 catalyzes the calcium-dependent hydrolysis of the 2-acyl groups in 3-sn-phosphoglycerides. In Gloydius halys (Chinese water mocassin), this protein is Acidic phospholipase A2 A.